The sequence spans 498 residues: ATP synthase subunit beta, chloroplastic (498 aa).

172-179 is a binding site for ATP; it reads GGAGVGKT.

It belongs to the ATPase alpha/beta chains family. As to quaternary structure, F-type ATPases have 2 components, CF(1) - the catalytic core - and CF(0) - the membrane proton channel. CF(1) has five subunits: alpha(3), beta(3), gamma(1), delta(1), epsilon(1). CF(0) has four main subunits: a(1), b(1), b'(1) and c(9-12).

It localises to the plastid. The protein resides in the chloroplast thylakoid membrane. The catalysed reaction is ATP + H2O + 4 H(+)(in) = ADP + phosphate + 5 H(+)(out). Produces ATP from ADP in the presence of a proton gradient across the membrane. The catalytic sites are hosted primarily by the beta subunits. This is ATP synthase subunit beta, chloroplastic from Populus trichocarpa (Western balsam poplar).